The following is a 102-amino-acid chain: Small ribosomal subunit protein uS10 (102 aa).

This sequence belongs to the universal ribosomal protein uS10 family. Part of the 30S ribosomal subunit.

Its function is as follows. Involved in the binding of tRNA to the ribosomes. This chain is Small ribosomal subunit protein uS10, found in Clostridium novyi (strain NT).